A 224-amino-acid chain; its full sequence is Phosphoglycolate phosphatase (224 aa).

Asp8 functions as the Nucleophile in the catalytic mechanism. Mg(2+) contacts are provided by Asp8, Asp10, Gly11, and Gly43. A substrate-binding site is contributed by Lys151. Mg(2+) contacts are provided by Asp174, Ser175, and Asp178.

This sequence belongs to the HAD-like hydrolase superfamily. Archaeal SPP-like hydrolase family. As to quaternary structure, homodimer. It depends on Mg(2+) as a cofactor.

It carries out the reaction 2-phosphoglycolate + H2O = glycolate + phosphate. Its activity is regulated as follows. Inhibited by Ca(2+) ions and by high chloride ion concentration. By contrast, low chloride concentration (up to 50 mM) slightly activate the enzyme. Catalyzes the dephosphorylation of 2-phosphoglycolate. Also has significant, but less efficient, pyrophosphatase activity, since it is able to catalyze the release of phosphate from inorganic pyrophosphate (PPi). In Thermoplasma acidophilum (strain ATCC 25905 / DSM 1728 / JCM 9062 / NBRC 15155 / AMRC-C165), this protein is Phosphoglycolate phosphatase.